The chain runs to 263 residues: uncharacterized protein (263 aa).

31–38 (GPTGSGKT) lines the ATP pocket.

This sequence belongs to the CbbQ/NirQ/NorQ/GpvN family.

This is an uncharacterized protein from Staphylococcus aureus (strain NCTC 8325 / PS 47).